We begin with the raw amino-acid sequence, 95 residues long: Large ribosomal subunit protein bL21 (95 aa).

This sequence belongs to the bacterial ribosomal protein bL21 family. In terms of assembly, part of the 50S ribosomal subunit. Contacts protein L20.

In terms of biological role, this protein binds to 23S rRNA in the presence of protein L20. This is Large ribosomal subunit protein bL21 from Chlorobaculum tepidum (strain ATCC 49652 / DSM 12025 / NBRC 103806 / TLS) (Chlorobium tepidum).